The following is a 687-amino-acid chain: Polyphosphate kinase (687 aa).

ATP is bound at residue N45. Residues R375 and R405 each contribute to the Mg(2+) site. The Phosphohistidine intermediate role is filled by H435. Residues Y472, R568, and H596 each contribute to the ATP site.

This sequence belongs to the polyphosphate kinase 1 (PPK1) family. Mg(2+) is required as a cofactor. An intermediate of this reaction is the autophosphorylated ppk in which a phosphate is covalently linked to a histidine residue through a N-P bond.

It catalyses the reaction [phosphate](n) + ATP = [phosphate](n+1) + ADP. Catalyzes the reversible transfer of the terminal phosphate of ATP to form a long-chain polyphosphate (polyP). The protein is Polyphosphate kinase of Burkholderia ambifaria (strain MC40-6).